Reading from the N-terminus, the 365-residue chain is DNA replication and repair protein RecF (365 aa).

Position 30-37 (30-37) interacts with ATP; the sequence is GDNGEGKT.

Belongs to the RecF family.

It localises to the cytoplasm. In terms of biological role, the RecF protein is involved in DNA metabolism; it is required for DNA replication and normal SOS inducibility. RecF binds preferentially to single-stranded, linear DNA. It also seems to bind ATP. The sequence is that of DNA replication and repair protein RecF from Leptospira borgpetersenii serovar Hardjo-bovis (strain JB197).